Reading from the N-terminus, the 104-residue chain is AVIToxin-VAR2 (104 aa).

Positions 1–19 are cleaved as a signal peptide; it reads MRSLLCAPLLLLLLSAGES. 5 disulfide bridges follow: cysteine 26–cysteine 38, cysteine 32–cysteine 50, cysteine 37–cysteine 78, cysteine 60–cysteine 86, and cysteine 80–cysteine 96.

The protein belongs to the AVIT (prokineticin) family. In terms of tissue distribution, expressed by the venom gland.

Its subcellular location is the secreted. In terms of biological role, potent agonist for both PKR1/PROKR1 and PKR2/PROKR2. Potently contracts gastrointestinal (GI) smooth muscle. This Varanus varius (Lace monitor lizard) protein is AVIToxin-VAR2.